The following is a 257-amino-acid chain: UPF0246 protein Daro_2893 (257 aa).

It belongs to the UPF0246 family.

The chain is UPF0246 protein Daro_2893 from Dechloromonas aromatica (strain RCB).